The primary structure comprises 151 residues: Small ribosomal subunit protein uS15 (151 aa).

Belongs to the universal ribosomal protein uS15 family.

The chain is Small ribosomal subunit protein uS15 (RPS13) from Ciona intestinalis (Transparent sea squirt).